The primary structure comprises 461 residues: Fumarate hydratase class II (461 aa).

Residues Ser97–Thr99, His127–Asp130, Ser137–Asn139, and Thr185 each bind substrate. The active-site Proton donor/acceptor is His186. The active site involves Ser316. Residues Ser317 and Lys322–Asn324 each bind substrate.

The protein belongs to the class-II fumarase/aspartase family. Fumarase subfamily. Homotetramer.

The protein resides in the cytoplasm. It catalyses the reaction (S)-malate = fumarate + H2O. Its pathway is carbohydrate metabolism; tricarboxylic acid cycle; (S)-malate from fumarate: step 1/1. In terms of biological role, involved in the TCA cycle. Catalyzes the stereospecific interconversion of fumarate to L-malate. This Staphylococcus aureus (strain Mu50 / ATCC 700699) protein is Fumarate hydratase class II.